We begin with the raw amino-acid sequence, 59 residues long: UPF0434 protein COSY_0767 (59 aa).

Belongs to the UPF0434 family.

This chain is UPF0434 protein COSY_0767, found in Vesicomyosocius okutanii subsp. Calyptogena okutanii (strain HA).